The following is a 169-amino-acid chain: Nicotinamide-nucleotide adenylyltransferase (169 aa).

The protein belongs to the archaeal NMN adenylyltransferase family.

Its subcellular location is the cytoplasm. It carries out the reaction beta-nicotinamide D-ribonucleotide + ATP + H(+) = diphosphate + NAD(+). It functions in the pathway cofactor biosynthesis; NAD(+) biosynthesis; NAD(+) from nicotinamide D-ribonucleotide: step 1/1. The polypeptide is Nicotinamide-nucleotide adenylyltransferase (Picrophilus torridus (strain ATCC 700027 / DSM 9790 / JCM 10055 / NBRC 100828 / KAW 2/3)).